Here is a 969-residue protein sequence, read N- to C-terminus: Probable Rho-type GTPase-activating protein 3 (969 aa).

LIM zinc-binding domains lie at 17–81 (TVCF…CTAC) and 76–135 (HTCT…RHPS). 3 disordered regions span residues 170–223 (IEIM…ADSL), 348–459 (ATSP…VEEL), and 613–646 (TSSK…SPNL). Residues 193–202 (ETPTNMSQAE) show a composition bias toward polar residues. 2 stretches are compositionally biased toward low complexity: residues 212-223 (DSNLASNSADSL) and 350-361 (SPFRPFSPSYRS). Composition is skewed to polar residues over residues 369 to 392 (TRSP…SFAQ) and 418 to 432 (LSET…SLGS). Residues 450–459 (SERDSDVEEL) show a composition bias toward basic and acidic residues. Positions 613–623 (TSSKNTTSSIN) are enriched in low complexity. Positions 624–637 (PLTAVSSNSGQSSG) are enriched in polar residues. The Phorbol-ester/DAG-type zinc finger occupies 697–744 (DHVFHVNAIFKPSRCYICSESVWGSELRCFHCSISCHSRCLKRLFAES). The Rho-GAP domain occupies 780–966 (RSLENQLKIE…FMLDNVDKIL (187 aa)).

As to quaternary structure, interacts with dil1.

The protein resides in the cell tip. In terms of biological role, GTPase-activating protein for Rho-type proteins. The polypeptide is Probable Rho-type GTPase-activating protein 3 (rga3) (Schizosaccharomyces pombe (strain 972 / ATCC 24843) (Fission yeast)).